The following is a 276-amino-acid chain: MSTGNVTTLRRPEAPPSLPAGTEAKIEHHARPAEGKVAFSFRNVTKSFGDKPVLRGIDLDVREGEFLAVIGKSGCGKSTLLRILAGLDTPTTGTVSKDPSNRTRMMFQEPRLLPWERIANNVSVGLTGIAKGEAAREQALGILDEVGLKDRAGEWPYVLSGGQKQRVALARALVAHPQILALDEPLGALDALTRIEMQLLLERIWRKQKFTAVLVTHDVSEAVALADRIVVIDEGRIALDLDVKLPRPRRHGTPEFARLEEQVLNQLFGRGDITGQ.

Positions 1–21 (MSTGNVTTLRRPEAPPSLPAG) are disordered. The ABC transporter domain maps to 39–259 (FSFRNVTKSF…RHGTPEFARL (221 aa)). 71 to 78 (GKSGCGKS) provides a ligand contact to ATP.

Belongs to the ABC transporter superfamily. Aliphatic sulfonates importer (TC 3.A.1.17.2) family. The complex is composed of two ATP-binding proteins (SsuB), two transmembrane proteins (SsuC) and a solute-binding protein (SsuA).

The protein localises to the cell inner membrane. The catalysed reaction is ATP + H2O + aliphatic sulfonate-[sulfonate-binding protein]Side 1 = ADP + phosphate + aliphatic sulfonateSide 2 + [sulfonate-binding protein]Side 1.. In terms of biological role, part of the ABC transporter complex SsuABC involved in aliphatic sulfonates import. Responsible for energy coupling to the transport system. In Agrobacterium fabrum (strain C58 / ATCC 33970) (Agrobacterium tumefaciens (strain C58)), this protein is Aliphatic sulfonates import ATP-binding protein SsuB 1.